The chain runs to 261 residues: Type III pantothenate kinase (261 aa).

ATP is bound at residue 6–13 (DVGNTNAK). 108–111 (GADR) lines the substrate pocket. The active-site Proton acceptor is aspartate 110. Threonine 134 serves as a coordination point for ATP. Residue threonine 188 coordinates substrate.

Belongs to the type III pantothenate kinase family. As to quaternary structure, homodimer. NH4(+) serves as cofactor. The cofactor is K(+).

It is found in the cytoplasm. The catalysed reaction is (R)-pantothenate + ATP = (R)-4'-phosphopantothenate + ADP + H(+). It participates in cofactor biosynthesis; coenzyme A biosynthesis; CoA from (R)-pantothenate: step 1/5. Catalyzes the phosphorylation of pantothenate (Pan), the first step in CoA biosynthesis. The protein is Type III pantothenate kinase of Sphingopyxis alaskensis (strain DSM 13593 / LMG 18877 / RB2256) (Sphingomonas alaskensis).